The following is a 494-amino-acid chain: Probable cytosol aminopeptidase (494 aa).

The Mn(2+) site is built by K260 and D265. Residue K272 is part of the active site. D283, D342, and E344 together coordinate Mn(2+). The active site involves R346.

This sequence belongs to the peptidase M17 family. The cofactor is Mn(2+).

The protein localises to the cytoplasm. It catalyses the reaction Release of an N-terminal amino acid, Xaa-|-Yaa-, in which Xaa is preferably Leu, but may be other amino acids including Pro although not Arg or Lys, and Yaa may be Pro. Amino acid amides and methyl esters are also readily hydrolyzed, but rates on arylamides are exceedingly low.. It carries out the reaction Release of an N-terminal amino acid, preferentially leucine, but not glutamic or aspartic acids.. In terms of biological role, presumably involved in the processing and regular turnover of intracellular proteins. Catalyzes the removal of unsubstituted N-terminal amino acids from various peptides. This chain is Probable cytosol aminopeptidase, found in Bacillus thuringiensis subsp. konkukian (strain 97-27).